The chain runs to 123 residues: Large ribosomal subunit protein uL14 (123 aa).

Belongs to the universal ribosomal protein uL14 family. As to quaternary structure, part of the 50S ribosomal subunit. Forms a cluster with proteins L3 and L19. In the 70S ribosome, L14 and L19 interact and together make contacts with the 16S rRNA in bridges B5 and B8.

Binds to 23S rRNA. Forms part of two intersubunit bridges in the 70S ribosome. The chain is Large ribosomal subunit protein uL14 from Cronobacter sakazakii (strain ATCC BAA-894) (Enterobacter sakazakii).